The primary structure comprises 157 residues: MGAQARRERLAQLVAPILAEAGLDLEGLDITPVGKRRLVRVVVDSDDGVDLERIGEVSQKISTALDEVDVMGQSPYVLEVTSPGVDRPLTEPRHWRRARGRLVHAPLVAGGQVKGRVIDADETGVTFDVDGQSQVYAFSDLGRGKVQVEFRHDDAAD.

It belongs to the RimP family.

The protein localises to the cytoplasm. Its function is as follows. Required for maturation of 30S ribosomal subunits. The chain is Ribosome maturation factor RimP from Thermobifida fusca (strain YX).